The sequence spans 359 residues: Probable dual-specificity RNA methyltransferase RlmN (359 aa).

The Proton acceptor role is filled by E99. The region spanning 105–342 is the Radical SAM core domain; it reads TENRRTACVS…VTIRKSYGTT (238 aa). C112 and C347 are joined by a disulfide. Residues C119, C123, and C126 each contribute to the [4Fe-4S] cluster site. S-adenosyl-L-methionine-binding positions include 171–172, S204, 227–229, and N304; these read GE and SLH. The S-methylcysteine intermediate role is filled by C347.

The protein belongs to the radical SAM superfamily. RlmN family. [4Fe-4S] cluster serves as cofactor.

It is found in the cytoplasm. The catalysed reaction is adenosine(2503) in 23S rRNA + 2 reduced [2Fe-2S]-[ferredoxin] + 2 S-adenosyl-L-methionine = 2-methyladenosine(2503) in 23S rRNA + 5'-deoxyadenosine + L-methionine + 2 oxidized [2Fe-2S]-[ferredoxin] + S-adenosyl-L-homocysteine. It carries out the reaction adenosine(37) in tRNA + 2 reduced [2Fe-2S]-[ferredoxin] + 2 S-adenosyl-L-methionine = 2-methyladenosine(37) in tRNA + 5'-deoxyadenosine + L-methionine + 2 oxidized [2Fe-2S]-[ferredoxin] + S-adenosyl-L-homocysteine. Its function is as follows. Specifically methylates position 2 of adenine 2503 in 23S rRNA and position 2 of adenine 37 in tRNAs. The sequence is that of Probable dual-specificity RNA methyltransferase RlmN from Pelodictyon phaeoclathratiforme (strain DSM 5477 / BU-1).